A 961-amino-acid polypeptide reads, in one-letter code: Integrator complex subunit 7 (961 aa).

Positions 937–955 (QVRLQQQQGQPPSQQQQQR) are enriched in low complexity. The tract at residues 937–961 (QVRLQQQQGQPPSQQQQQRTAYSRF) is disordered.

It belongs to the Integrator subunit 7 family. In terms of assembly, component of the Integrator complex, composed of core subunits INTS1, INTS2, INTS3, INTS4, INTS5, INTS6, INTS7, INTS8, INTS9/RC74, INTS10, INTS11/CPSF3L, INTS12, INTS13, INTS14 and INTS15. The core complex associates with protein phosphatase 2A subunits PPP2CA and PPP2R1A, to form the Integrator-PP2A (INTAC) complex.

The protein localises to the nucleus. Its subcellular location is the chromosome. It localises to the cytoplasm. In terms of biological role, component of the integrator complex, a multiprotein complex that terminates RNA polymerase II (Pol II) transcription in the promoter-proximal region of genes. The integrator complex provides a quality checkpoint during transcription elongation by driving premature transcription termination of transcripts that are unfavorably configured for transcriptional elongation: the complex terminates transcription by (1) catalyzing dephosphorylation of the C-terminal domain (CTD) of Pol II subunit POLR2A/RPB1 and SUPT5H/SPT5, (2) degrading the exiting nascent RNA transcript via endonuclease activity and (3) promoting the release of Pol II from bound DNA. The integrator complex is also involved in terminating the synthesis of non-coding Pol II transcripts, such as enhancer RNAs (eRNAs), small nuclear RNAs (snRNAs), telomerase RNAs and long non-coding RNAs (lncRNAs). The polypeptide is Integrator complex subunit 7 (INTS7) (Gallus gallus (Chicken)).